We begin with the raw amino-acid sequence, 233 residues long: C-type lectin domain family 2 member D5 (233 aa).

Positions 1–52 (MPSSAHLQDPPPLLSRTLTQNEGQTSLRQSSSCGPSAASASESLSGSTESRI) are disordered. Topologically, residues 1-76 (MPSSAHLQDP…PLEYPAGLYC (76 aa)) are cytoplasmic. The segment covering 16 to 29 (RTLTQNEGQTSLRQ) has biased composition (polar residues). The segment covering 30–50 (SSSCGPSAASASESLSGSTES) has biased composition (low complexity). A helical; Signal-anchor for type II membrane protein membrane pass occupies residues 77–97 (CYVVIIVLSVAVVALSVALSV). At 98 to 233 (KKTAQISTIN…KPNSYTSQCL (136 aa)) the chain is on the extracellular side. In terms of domain architecture, C-type lectin spans 119–228 (VGNKCFYFNE…KSICRKPNSY (110 aa)). N-linked (GlcNAc...) asparagine glycosylation is present at Asn-132.

The protein localises to the cell membrane. Lectin-type cell surface receptor. The polypeptide is C-type lectin domain family 2 member D5 (Ocil) (Rattus norvegicus (Rat)).